The following is a 528-amino-acid chain: Probable rhamnogalacturonate lyase A (528 aa).

An N-terminal signal peptide occupies residues 1-20 (MFFQTGLLLSLSLWTKVAYA). 2 disulfide bridges follow: C50-C93 and C184-C193. N-linked (GlcNAc...) asparagine glycosylation is present at N56. N-linked (GlcNAc...) asparagine glycosylation occurs at N351.

It belongs to the polysaccharide lyase 4 family.

The protein localises to the secreted. The enzyme catalyses Endotype eliminative cleavage of L-alpha-rhamnopyranosyl-(1-&gt;4)-alpha-D-galactopyranosyluronic acid bonds of rhamnogalacturonan I domains in ramified hairy regions of pectin leaving L-rhamnopyranose at the reducing end and 4-deoxy-4,5-unsaturated D-galactopyranosyluronic acid at the non-reducing end.. Its function is as follows. Pectinolytic enzymes consist of four classes of enzymes: pectin lyase, polygalacturonase, pectin methylesterase and rhamnogalacturonase. Degrades the rhamnogalacturonan I (RG-I) backbone of pectin. Active against linseed rhamnogalacturonan. The chain is Probable rhamnogalacturonate lyase A (rglA) from Aspergillus clavatus (strain ATCC 1007 / CBS 513.65 / DSM 816 / NCTC 3887 / NRRL 1 / QM 1276 / 107).